A 146-amino-acid chain; its full sequence is Hemoglobin subunit beta (146 aa).

Positions 2–146 (QWTAEEKQLI…VAHALARKYH (145 aa)) constitute a Globin domain. Residues histidine 63 and histidine 92 each contribute to the heme b site.

It belongs to the globin family. Heterotetramer of two alpha chains and two beta chains. As to expression, red blood cells.

Its function is as follows. Involved in oxygen transport from the lung to the various peripheral tissues. This Turdus merula (Common blackbird) protein is Hemoglobin subunit beta (HBB).